The chain runs to 255 residues: Snake venom serine protease HS112 (255 aa).

Residues 1–18 form the signal peptide; it reads MVLIRVIANLLILQLSYA. Positions 19 to 24 are excised as a propeptide; that stretch reads QKSSEL. Positions 25–246 constitute a Peptidase S1 domain; sequence VIGGDECDIN…YLPWIQSIIA (222 aa). 6 disulfide bridges follow: Cys31–Cys162, Cys49–Cys65, Cys97–Cys253, Cys141–Cys207, Cys173–Cys186, and Cys197–Cys222. Catalysis depends on charge relay system residues His64 and Asp109. The N-linked (GlcNAc...) asparagine glycan is linked to Asn169. The active-site Charge relay system is Ser201. N-linked (GlcNAc...) asparagine glycosylation occurs at Asn248.

Belongs to the peptidase S1 family. Snake venom subfamily. As to quaternary structure, monomer. In terms of tissue distribution, expressed by the venom gland.

The protein localises to the secreted. Its function is as follows. Snake venom serine protease that may act in the hemostasis system of the prey. In Bothrops jararaca (Jararaca), this protein is Snake venom serine protease HS112.